Consider the following 381-residue polypeptide: MTNLRKTHPLMKIINHSFIDLPAPSNISAWWNFGSLLGICLVIQILTGLFLAMHYTSDTLTAFSSVAHICRDVNYGWLIRNLHANGASMFFMCLFLHVGRGIYYGSYLYKETWNIGVILLLTVMATAFVGYVLPWGQMSFWGATVITNLLSAIPYIGTTLAEWIWGGFLVDKATLTRFFAFHFILPFIIMALVIVHLLFLHETGSNNPSGINPNSDKIPFHPYYTIKDALGLMFLLLVLLTLALFSPDSLGDPDNFSPANPLNTPPHIKPEWYFLFAYAILRSIPNKLGGVLALLASILILLIIPLLHTANQRSMMFRPVSQTLFWILTANLITLTWIGGQPVEQPFIIIGQSASILLSMLILVLMPLAGLFENYMLKPKW.

Transmembrane regions (helical) follow at residues 33 to 53 (FGSLLGICLVIQILTGLFLAM), 77 to 98 (WLIRNLHANGASMFFMCLFLHV), 113 to 133 (WNIGVILLLTVMATAFVGYVL), and 178 to 198 (FFAFHFILPFIIMALVIVHLL). The heme b site is built by histidine 83 and histidine 97. 2 residues coordinate heme b: histidine 182 and histidine 196. Histidine 201 is an a ubiquinone binding site. 4 helical membrane passes run 226 to 246 (IKDALGLMFLLLVLLTLALFS), 288 to 308 (LGGVLALLASILILLIIPLLH), 320 to 340 (VSQTLFWILTANLITLTWIGG), and 347 to 367 (FIIIGQSASILLSMLILVLMP).

This sequence belongs to the cytochrome b family. In terms of assembly, the cytochrome bc1 complex contains 11 subunits: 3 respiratory subunits (MT-CYB, CYC1 and UQCRFS1), 2 core proteins (UQCRC1 and UQCRC2) and 6 low-molecular weight proteins (UQCRH/QCR6, UQCRB/QCR7, UQCRQ/QCR8, UQCR10/QCR9, UQCR11/QCR10 and a cleavage product of UQCRFS1). This cytochrome bc1 complex then forms a dimer. It depends on heme b as a cofactor.

It localises to the mitochondrion inner membrane. Its function is as follows. Component of the ubiquinol-cytochrome c reductase complex (complex III or cytochrome b-c1 complex) that is part of the mitochondrial respiratory chain. The b-c1 complex mediates electron transfer from ubiquinol to cytochrome c. Contributes to the generation of a proton gradient across the mitochondrial membrane that is then used for ATP synthesis. The polypeptide is Cytochrome b (MT-CYB) (Ningaui yvonnae (Southern ningaui)).